Reading from the N-terminus, the 155-residue chain is uncharacterized protein (155 aa).

A helical membrane pass occupies residues 5-25 (GIIICVGIAFLIFIFLWAYFK).

Its subcellular location is the membrane. This is an uncharacterized protein from Acheta domesticus (House cricket).